The sequence spans 713 residues: uncharacterized protein (713 aa).

The helical transmembrane segment at 686 to 706 (VWKFNPALYSTITNIFLLIIF) threads the bilayer.

Belongs to the plectrovirus ORF1 family.

The protein localises to the host membrane. This is an uncharacterized protein from Spiroplasma melliferum (SpV1).